The primary structure comprises 185 residues: UPF0397 protein LBA0922 (185 aa).

The next 5 membrane-spanning stretches (helical) occupy residues 11 to 31 (VVAI…TSIP), 45 to 65 (FLAF…GFIG), 72 to 92 (IMYG…GWII), 111 to 131 (IILF…VVAP), and 146 to 166 (FVQG…IGTI).

It belongs to the UPF0397 family.

The protein localises to the cell membrane. This is UPF0397 protein LBA0922 from Lactobacillus acidophilus (strain ATCC 700396 / NCK56 / N2 / NCFM).